The following is a 605-amino-acid chain: DNA mismatch repair protein MutL (605 aa).

The protein belongs to the DNA mismatch repair MutL/HexB family.

This protein is involved in the repair of mismatches in DNA. It is required for dam-dependent methyl-directed DNA mismatch repair. May act as a 'molecular matchmaker', a protein that promotes the formation of a stable complex between two or more DNA-binding proteins in an ATP-dependent manner without itself being part of a final effector complex. This is DNA mismatch repair protein MutL from Methylocella silvestris (strain DSM 15510 / CIP 108128 / LMG 27833 / NCIMB 13906 / BL2).